The following is a 134-amino-acid chain: Large-conductance mechanosensitive channel (134 aa).

2 consecutive transmembrane segments (helical) span residues 16 to 36 (VVDM…VSSF) and 76 to 96 (GVFL…FIAV).

This sequence belongs to the MscL family. Homopentamer.

Its subcellular location is the cell inner membrane. Functionally, channel that opens in response to stretch forces in the membrane lipid bilayer. May participate in the regulation of osmotic pressure changes within the cell. The chain is Large-conductance mechanosensitive channel from Thioalkalivibrio sulfidiphilus (strain HL-EbGR7).